Reading from the N-terminus, the 126-residue chain is Holo-[acyl-carrier-protein] synthase (126 aa).

Residues aspartate 9 and glutamate 58 each coordinate Mg(2+).

The protein belongs to the P-Pant transferase superfamily. AcpS family. Requires Mg(2+) as cofactor.

It localises to the cytoplasm. The enzyme catalyses apo-[ACP] + CoA = holo-[ACP] + adenosine 3',5'-bisphosphate + H(+). In terms of biological role, transfers the 4'-phosphopantetheine moiety from coenzyme A to a Ser of acyl-carrier-protein. The polypeptide is Holo-[acyl-carrier-protein] synthase (Escherichia coli O127:H6 (strain E2348/69 / EPEC)).